A 610-amino-acid polypeptide reads, in one-letter code: Glutamine--fructose-6-phosphate aminotransferase [isomerizing] (610 aa).

Catalysis depends on Cys-2, which acts as the Nucleophile; for GATase activity. In terms of domain architecture, Glutamine amidotransferase type-2 spans 2 to 221; that stretch reads CGIVGAVAQR…DGDVVDLQLA (220 aa). SIS domains are found at residues 286–426 and 459–600; these read AYKV…TRGR and WADR…VDKP. The active-site For Fru-6P isomerization activity is Lys-605.

In terms of assembly, homodimer.

The protein localises to the cytoplasm. It catalyses the reaction D-fructose 6-phosphate + L-glutamine = D-glucosamine 6-phosphate + L-glutamate. Its function is as follows. Catalyzes the first step in hexosamine metabolism, converting fructose-6P into glucosamine-6P using glutamine as a nitrogen source. This is Glutamine--fructose-6-phosphate aminotransferase [isomerizing] from Bordetella bronchiseptica (strain ATCC BAA-588 / NCTC 13252 / RB50) (Alcaligenes bronchisepticus).